We begin with the raw amino-acid sequence, 72 residues long: Heat shock factor-binding protein 1-like protein 1 (72 aa).

Residues 12–62 (DLLQNAAENLLLEVEEHFQALTTTLNLRMEEMGSRIEDLQRNVDDLMTQAG) are a coiled coil.

Belongs to the HSBP1 family.

The protein is Heat shock factor-binding protein 1-like protein 1 (Hsbp1l1) of Mus musculus (Mouse).